We begin with the raw amino-acid sequence, 159 residues long: Peptide methionine sulfoxide reductase MsrB (159 aa).

Positions 22 to 144 (RERLEANLTA…NSVSLQFVKA (123 aa)) constitute a MsrB domain. Residues Cys61, Cys64, Cys110, and Cys113 each contribute to the Zn(2+) site. Cys133 acts as the Nucleophile in catalysis.

Belongs to the MsrB Met sulfoxide reductase family. It depends on Zn(2+) as a cofactor.

The enzyme catalyses L-methionyl-[protein] + [thioredoxin]-disulfide + H2O = L-methionyl-(R)-S-oxide-[protein] + [thioredoxin]-dithiol. This chain is Peptide methionine sulfoxide reductase MsrB, found in Caulobacter vibrioides (strain ATCC 19089 / CIP 103742 / CB 15) (Caulobacter crescentus).